The chain runs to 187 residues: Oligoribonuclease (187 aa).

One can recognise an Exonuclease domain in the interval 7–170 (LCWLDMEMTG…DDILESIEEM (164 aa)). Tyr-128 is a catalytic residue.

It belongs to the oligoribonuclease family.

Its subcellular location is the cytoplasm. In terms of biological role, 3'-to-5' exoribonuclease specific for small oligoribonucleotides. The polypeptide is Oligoribonuclease (Neisseria meningitidis serogroup A / serotype 4A (strain DSM 15465 / Z2491)).